The sequence spans 372 residues: MADS-box transcription factor pvg4 (372 aa).

The region spanning 1-61 (MGRKKISIAP…GRLHVFCSSD (61 aa)) is the MADS-box domain. The segment at 81–187 (SHFSSSPVEE…HPPHPHFHNN (107 aa)) is disordered. The span at 84–100 (SSSPVEESSTVSPETTT) shows a compositional bias: low complexity. Residues 114–145 (QDQPLSDSQLDTGDSPATSETTVQDYNPQVQS) are compositionally biased toward polar residues. Basic residues predominate over residues 167 to 184 (QHHHPHTRPPHHPPHPHF).

The protein resides in the nucleus. Acts in transcription regulation. May bind to a MEF2-like typee II promoter sequence. This Schizosaccharomyces pombe (strain 972 / ATCC 24843) (Fission yeast) protein is MADS-box transcription factor pvg4 (pvg4).